The following is a 168-amino-acid chain: Photosystem I assembly protein Ycf3 (168 aa).

TPR repeat units follow at residues 35-68 (AFTYYRDGMSAQSDGNYAEALQNYYEATRLEIDP), 72-105 (SYILYNIGLIHTSNGEHTKALEYYFRALERNPFL), and 120-153 (GEQAIRQGDSEIAEAWSDQAAEYWKQAIALTPGN).

It belongs to the Ycf3 family.

Its subcellular location is the plastid. It localises to the chloroplast thylakoid membrane. Functionally, essential for the assembly of the photosystem I (PSI) complex. May act as a chaperone-like factor to guide the assembly of the PSI subunits. This chain is Photosystem I assembly protein Ycf3, found in Chloranthus spicatus (Chulantree).